Consider the following 271-residue polypeptide: Tryptophan synthase alpha chain (271 aa).

Residues E59 and D70 each act as proton acceptor in the active site.

Belongs to the TrpA family. In terms of assembly, tetramer of two alpha and two beta chains.

It catalyses the reaction (1S,2R)-1-C-(indol-3-yl)glycerol 3-phosphate + L-serine = D-glyceraldehyde 3-phosphate + L-tryptophan + H2O. It functions in the pathway amino-acid biosynthesis; L-tryptophan biosynthesis; L-tryptophan from chorismate: step 5/5. The alpha subunit is responsible for the aldol cleavage of indoleglycerol phosphate to indole and glyceraldehyde 3-phosphate. In Methanosarcina mazei (strain ATCC BAA-159 / DSM 3647 / Goe1 / Go1 / JCM 11833 / OCM 88) (Methanosarcina frisia), this protein is Tryptophan synthase alpha chain.